The sequence spans 130 residues: Small ribosomal subunit protein uS8 (130 aa).

This sequence belongs to the universal ribosomal protein uS8 family. Part of the 30S ribosomal subunit. Contacts proteins S5 and S12.

Its function is as follows. One of the primary rRNA binding proteins, it binds directly to 16S rRNA central domain where it helps coordinate assembly of the platform of the 30S subunit. In Yersinia enterocolitica serotype O:8 / biotype 1B (strain NCTC 13174 / 8081), this protein is Small ribosomal subunit protein uS8.